The chain runs to 550 residues: CCR4-NOT transcription complex subunit 6-like-B (550 aa).

The tract at residues 1–148 (MPKEKYDPPD…LYQEPDGMRK (148 aa)) is required for interaction with cnot1, cnot3 and cnot7. LRR repeat units follow at residues 52–73 (HLTV…IAKL), 75–96 (NLVY…LGNV), 98–120 (SLRE…GRLF), and 121–143 (RLQT…YQEP). The nuclease domain stretch occupies residues 153–550 (MLDNLSVHPE…INGVHLPSRR (398 aa)). E235 provides a ligand contact to Mg(2+). Substrate contacts are provided by E235, E271, H355, and P360. D405 provides a ligand contact to Mg(2+). D405 serves as the catalytic Proton donor/acceptor. 3 residues coordinate substrate: N407, N474, and F479.

Belongs to the CCR4/nocturin family. Component of the CCR4-NOT complex. Mg(2+) is required as a cofactor.

The protein localises to the cytoplasm. The protein resides in the nucleus. The catalysed reaction is Exonucleolytic cleavage of poly(A) to 5'-AMP.. Its function is as follows. Poly(A) nuclease with 3'-5' RNase activity. Catalytic component of the CCR4-NOT complex which is one of the major cellular mRNA deadenylases and is linked to various cellular processes including bulk mRNA degradation, miRNA-mediated repression, translational repression during translational initiation and general transcription regulation. Additional complex functions may be a consequence of its influence on mRNA expression. In Xenopus laevis (African clawed frog), this protein is CCR4-NOT transcription complex subunit 6-like-B (cnot6l-b).